We begin with the raw amino-acid sequence, 90 residues long: DNA-directed RNA polymerase subunit omega (90 aa).

It belongs to the RNA polymerase subunit omega family. The RNAP catalytic core consists of 2 alpha, 1 beta, 1 beta' and 1 omega subunit. When a sigma factor is associated with the core the holoenzyme is formed, which can initiate transcription.

The catalysed reaction is RNA(n) + a ribonucleoside 5'-triphosphate = RNA(n+1) + diphosphate. Promotes RNA polymerase assembly. Latches the N- and C-terminal regions of the beta' subunit thereby facilitating its interaction with the beta and alpha subunits. The chain is DNA-directed RNA polymerase subunit omega from Alteromonas mediterranea (strain DSM 17117 / CIP 110805 / LMG 28347 / Deep ecotype).